The following is a 483-amino-acid chain: Aspartyl/glutamyl-tRNA(Asn/Gln) amidotransferase subunit B (483 aa).

This sequence belongs to the GatB/GatE family. GatB subfamily. As to quaternary structure, heterotrimer of A, B and C subunits.

It catalyses the reaction L-glutamyl-tRNA(Gln) + L-glutamine + ATP + H2O = L-glutaminyl-tRNA(Gln) + L-glutamate + ADP + phosphate + H(+). It carries out the reaction L-aspartyl-tRNA(Asn) + L-glutamine + ATP + H2O = L-asparaginyl-tRNA(Asn) + L-glutamate + ADP + phosphate + 2 H(+). Functionally, allows the formation of correctly charged Asn-tRNA(Asn) or Gln-tRNA(Gln) through the transamidation of misacylated Asp-tRNA(Asn) or Glu-tRNA(Gln) in organisms which lack either or both of asparaginyl-tRNA or glutaminyl-tRNA synthetases. The reaction takes place in the presence of glutamine and ATP through an activated phospho-Asp-tRNA(Asn) or phospho-Glu-tRNA(Gln). The protein is Aspartyl/glutamyl-tRNA(Asn/Gln) amidotransferase subunit B of Rickettsia rickettsii (strain Iowa).